The primary structure comprises 448 residues: Exodeoxyribonuclease 7 large subunit (448 aa).

Belongs to the XseA family. Heterooligomer composed of large and small subunits.

The protein localises to the cytoplasm. It carries out the reaction Exonucleolytic cleavage in either 5'- to 3'- or 3'- to 5'-direction to yield nucleoside 5'-phosphates.. Its function is as follows. Bidirectionally degrades single-stranded DNA into large acid-insoluble oligonucleotides, which are then degraded further into small acid-soluble oligonucleotides. This is Exodeoxyribonuclease 7 large subunit from Photobacterium profundum (strain SS9).